A 326-amino-acid polypeptide reads, in one-letter code: Beta-ketoacyl-[acyl-carrier-protein] synthase III (326 aa).

Residues Cys-112 and His-251 contribute to the active site. Residues 252–256 (QANSR) are ACP-binding. Asn-281 is an active-site residue.

Belongs to the thiolase-like superfamily. FabH family. As to quaternary structure, homodimer.

It localises to the cytoplasm. It carries out the reaction malonyl-[ACP] + acetyl-CoA + H(+) = 3-oxobutanoyl-[ACP] + CO2 + CoA. It functions in the pathway lipid metabolism; fatty acid biosynthesis. Catalyzes the condensation reaction of fatty acid synthesis by the addition to an acyl acceptor of two carbons from malonyl-ACP. Catalyzes the first condensation reaction which initiates fatty acid synthesis and may therefore play a role in governing the total rate of fatty acid production. Possesses both acetoacetyl-ACP synthase and acetyl transacylase activities. Its substrate specificity determines the biosynthesis of branched-chain and/or straight-chain of fatty acids. The protein is Beta-ketoacyl-[acyl-carrier-protein] synthase III of Clostridium botulinum (strain 657 / Type Ba4).